The following is a 467-amino-acid chain: UDP-N-acetylmuramate--L-alanine ligase (467 aa).

123-129 (GTHGKST) serves as a coordination point for ATP.

It belongs to the MurCDEF family.

The protein resides in the cytoplasm. The enzyme catalyses UDP-N-acetyl-alpha-D-muramate + L-alanine + ATP = UDP-N-acetyl-alpha-D-muramoyl-L-alanine + ADP + phosphate + H(+). It participates in cell wall biogenesis; peptidoglycan biosynthesis. Functionally, cell wall formation. In Arthrobacter sp. (strain FB24), this protein is UDP-N-acetylmuramate--L-alanine ligase.